The primary structure comprises 208 residues: Outer-membrane lipoprotein carrier protein (208 aa).

Residues 1-22 form the signal peptide; that stretch reads MKKRLCAVLLASPLLFSAAVFA.

The protein belongs to the LolA family. As to quaternary structure, monomer.

It is found in the periplasm. In terms of biological role, participates in the translocation of lipoproteins from the inner membrane to the outer membrane. Only forms a complex with a lipoprotein if the residue after the N-terminal Cys is not an aspartate (The Asp acts as a targeting signal to indicate that the lipoprotein should stay in the inner membrane). This is Outer-membrane lipoprotein carrier protein from Shewanella baltica (strain OS223).